A 535-amino-acid chain; its full sequence is Sodium/hydrogen exchanger 1 (535 aa).

The Cytoplasmic portion of the chain corresponds to 1–21 (MGMEVAAARLGALYTTSDYAS). A helical membrane pass occupies residues 22–42 (VVSINLFVALLCACIVLGHLL). The Vacuolar segment spans residues 43–46 (EENR). The helical transmembrane segment at 47–67 (WVNESITALIIGLCTGVVILL) threads the bilayer. Residues 68–75 (MTKGKSSH) lie on the Cytoplasmic side of the membrane. The helical transmembrane segment at 76–96 (LFVFSEDLFFIYLLPPIIFNA) threads the bilayer. Topologically, residues 97–114 (GFQVKKKQFFRNFMTITL) are vacuolar. A helical membrane pass occupies residues 115–135 (FGAVGTMISFFTISIAAIAIF). At 136–137 (SR) the chain is on the cytoplasmic side. The helical transmembrane segment at 138 to 158 (MNIGTLDVGDFLAIGAIFSAT) threads the bilayer. Residues 159–173 (DSVCTLQVLNQDETP) are Vacuolar-facing. A helical membrane pass occupies residues 174-194 (FLYSLVFGEGVVNDATSIVLF). The Cytoplasmic portion of the chain corresponds to 195–218 (NALQNFDLVHIDAAVVLKFLGNFF). A helical transmembrane segment spans residues 219 to 239 (YLFLSSTFLGVFAGLLSAYII). At 240–264 (KKLYIGRHSTDREVALMMLMAYLSY) the chain is on the vacuolar side. Residues 265–285 (MLAELLDLSGILTVFFCGIVM) traverse the membrane as a helical segment. Topologically, residues 286–304 (SHYTWHNVTESSRVTTKHA) are cytoplasmic. Residues 305 to 325 (FATLSFIAETFLFLYVGMDAL) form a helical membrane-spanning segment. At 326–344 (DIEKWEFASDRPGKSIGIS) the chain is on the vacuolar side. The chain crosses the membrane as a helical span at residues 345–365 (SILLGLVLIGRAAFVFPLSFL). Over 366-381 (SNLTKKAPNEKITWRQ) the chain is Cytoplasmic. A helical membrane pass occupies residues 382-402 (QVVIWWAGLMRGAVSIALAYN). Topologically, residues 403–415 (KFTRSGHTQLHGN) are vacuolar. A helical transmembrane segment spans residues 416–436 (AIMITSTITVVLFSTMVFGMM). Over 437–535 (TKPLIRLLLP…SPTEQSHGGR (99 aa)) the chain is Cytoplasmic. The interval 452–478 (VTSEPSSPKSLHSPLLTSMQGSDLEST) is disordered. The span at 454–469 (SEPSSPKSLHSPLLTS) shows a compositional bias: low complexity.

It belongs to the monovalent cation:proton antiporter 1 (CPA1) transporter (TC 2.A.36) family.

Its subcellular location is the vacuole membrane. The catalysed reaction is Na(+)(in) + H(+)(out) = Na(+)(out) + H(+)(in). It carries out the reaction K(+)(in) + H(+)(out) = K(+)(out) + H(+)(in). Functionally, vacuolar antiporter that acts in low affinity electroneutral exchange of protons H(+) for cations such as Na(+) or K(+) across membranes. Plays important roles in the transport of Na(+) and K(+) accumulated in the cytoplasm into vacuoles, and is involved in salt stress tolerance. The polypeptide is Sodium/hydrogen exchanger 1 (Oryza sativa subsp. japonica (Rice)).